The chain runs to 420 residues: Threonine aspartase 1 (420 aa).

The disordered stretch occupies residues 1-25; the sequence is MIMEKGMNSGEGLPSRSSQASAAKV. Threonine 234 acts as the Nucleophile in catalysis.

It belongs to the Ntn-hydrolase family. As to quaternary structure, intramolecular proteolysis generates 2 subunits, alpha and beta, which reassemble through a non-covalent association to form the fully active enzyme.

Protease responsible for KMT2A/MLL1 and KMT2D/MLL2 processing and activation. Through substrate activation, it controls the expression of HOXA genes, and the expression of key cell cycle regulators including CCNA1, CCNB1, CCNE1 and CDKN2A. The protein is Threonine aspartase 1 (Tasp1) of Mus musculus (Mouse).